The following is a 103-amino-acid chain: Large ribosomal subunit protein bL21 (103 aa).

The protein belongs to the bacterial ribosomal protein bL21 family. Part of the 50S ribosomal subunit. Contacts protein L20.

In terms of biological role, this protein binds to 23S rRNA in the presence of protein L20. This chain is Large ribosomal subunit protein bL21, found in Verminephrobacter eiseniae (strain EF01-2).